A 244-amino-acid chain; its full sequence is MIRTDAKDGALVLFSGGQDSATCVAWALERYQTVETLGFDYGQRHRVELECREGVRDALKHRFPAWAGRLGDDHMIDLSVLGAISDTAMTRTIEIETTANGLPNTFVPGRNLLFMTIAAAIAYRRGLRVLVGGMCETDFSGYPDCRDDTMKALQVALNLGMDTRIVLETPLMWLDKAQTWQLAEQLGGDALVELIRVETHTCYVGERAELHDWGFGCGECPACKLRKRGYEAYLKGERVTEAPL.

Residue 14-24 (FSGGQDSATCV) participates in ATP binding. Zn(2+) is bound by residues Cys-202, Cys-217, Cys-220, and Cys-223.

This sequence belongs to the QueC family. Requires Zn(2+) as cofactor.

The catalysed reaction is 7-carboxy-7-deazaguanine + NH4(+) + ATP = 7-cyano-7-deazaguanine + ADP + phosphate + H2O + H(+). Its pathway is purine metabolism; 7-cyano-7-deazaguanine biosynthesis. Functionally, catalyzes the ATP-dependent conversion of 7-carboxy-7-deazaguanine (CDG) to 7-cyano-7-deazaguanine (preQ(0)). In Burkholderia ambifaria (strain MC40-6), this protein is 7-cyano-7-deazaguanine synthase.